The chain runs to 148 residues: Gas vesicle protein J (148 aa).

2 disordered regions span residues 1–21 (MTTTPIHPTRPQTNSNRVIPT) and 118–148 (EETTLTANNPEDLQPMYEVNSQEGDNSQLEA). Polar residues predominate over residues 136-148 (VNSQEGDNSQLEA).

It belongs to the gas vesicle GvpA family. Interacts with GvpA.

The protein resides in the gas vesicle. A minor component of the gas vesicle, might be involved in nucleating gas vesicle formation. Gas vesicles (GV) are hollow, gas filled proteinaceous nanostructures. During planktonic growth they allow positioning of the organism at a favorable depth for light or nutrient acquisition. Functionally, cluster expression in E.coli (gvpA1-gvpA2-gvpC-gvpN-gvpJ-gvpK-gvpF-gvpG-gvpV-gvpW) allows cells to float and produces irregularly shaped gas vesicles. This chain is Gas vesicle protein J, found in Nostoc sp. (strain PCC 7120 / SAG 25.82 / UTEX 2576).